Consider the following 319-residue polypeptide: MNLVRTAMLLAFMTALFMAVGYVIGGRGGMMIALLMAAGMNFFSYWNSDRMVLRMYRAQEVDERDAPEYYGIVRDLATNAGLPMPRVYVIDSPQPNAFATGRNPQNAAVAASTGLLQSLSYEEVAGVMAHELAHIQYRDTLTMTLTATLAGAISMLGNFAFFFGGNRDNNNPLGFVGVLIAMIVAPFAAMLVQMAISRTREYSADRRGAEICGNPLSLASALRKIAGAAHAIPNYDAERNPATAHMFIINPLSGERMDNLFSTHPNTENRVAALERMAREMSAGSTAPARPDNAVRRSRSVPKTGWGRGGSEPPKGPWS.

The next 2 helical transmembrane spans lie at 6-26 (TAMLLAFMTALFMAVGYVIGG) and 28-48 (GGMMIALLMAAGMNFFSYWNS). Histidine 130 is a Zn(2+) binding site. Glutamate 131 is a catalytic residue. Position 134 (histidine 134) interacts with Zn(2+). The next 2 helical transmembrane spans lie at 145–165 (LTATLAGAISMLGNFAFFFGG) and 172–192 (PLGFVGVLIAMIVAPFAAMLV). Glutamate 201 contributes to the Zn(2+) binding site. A disordered region spans residues 279–319 (REMSAGSTAPARPDNAVRRSRSVPKTGWGRGGSEPPKGPWS).

It belongs to the peptidase M48B family. The cofactor is Zn(2+).

The protein resides in the cell inner membrane. The protein is Protease HtpX homolog of Sinorhizobium fredii (strain NBRC 101917 / NGR234).